The following is a 475-amino-acid chain: Glutamyl-tRNA(Gln) amidotransferase subunit A (475 aa).

Catalysis depends on charge relay system residues K69 and S144. The active-site Acyl-ester intermediate is the S168.

The protein belongs to the amidase family. GatA subfamily. As to quaternary structure, heterotrimer of A, B and C subunits.

It carries out the reaction L-glutamyl-tRNA(Gln) + L-glutamine + ATP + H2O = L-glutaminyl-tRNA(Gln) + L-glutamate + ADP + phosphate + H(+). Its function is as follows. Allows the formation of correctly charged Gln-tRNA(Gln) through the transamidation of misacylated Glu-tRNA(Gln) in organisms which lack glutaminyl-tRNA synthetase. The reaction takes place in the presence of glutamine and ATP through an activated gamma-phospho-Glu-tRNA(Gln). The protein is Glutamyl-tRNA(Gln) amidotransferase subunit A of Methanococcoides burtonii (strain DSM 6242 / NBRC 107633 / OCM 468 / ACE-M).